The chain runs to 1085 residues: Toxin VasX (1085 aa).

The segment at 1–20 is disordered; the sequence is MSNPNQAAKTGQTNDAQNPA. 4 consecutive transmembrane segments (helical) span residues 753-773, 813-833, 860-880, and 884-904; these read ALGE…AISA, IALV…ESWG, IIFY…PSIA, and AGWM…GVIL.

Its subcellular location is the secreted. It is found in the host membrane. Its function is as follows. Toxin secreted by the type VI (T6SS) secretion system that acts on prokaryotic target cells. Acts in conjunction with VasW, an accessory protein to VasX, to compromise the inner membrane of prokaryotic target cells. In Vibrio cholerae serotype O1 (strain ATCC 39315 / El Tor Inaba N16961), this protein is Toxin VasX.